Here is a 364-residue protein sequence, read N- to C-terminus: Spermatogenesis-associated protein 22 (364 aa).

5 stretches are compositionally biased toward polar residues: residues 1-13, 30-48, 73-108, 137-169, and 177-189; these read MKRN…TRST, QPLT…NASD, KTVN…SKSD, LMTN…LPNQ, and QTKS…STMR. 2 disordered regions span residues 1–51 and 70–189; these read MKRN…DNYD and PLTK…STMR.

In terms of assembly, component of a multiprotein complex with MEIOB and RPA2. Interacts with MEIOB. Interacts with the complex BRME1:HSF2BP:BRCA2.

It localises to the chromosome. Its function is as follows. Meiosis-specific protein required for homologous recombination in meiosis I. The polypeptide is Spermatogenesis-associated protein 22 (SPATA22) (Bos taurus (Bovine)).